The following is a 257-amino-acid chain: Thiazole synthase (257 aa).

Lysine 98 functions as the Schiff-base intermediate with DXP in the catalytic mechanism. 1-deoxy-D-xylulose 5-phosphate-binding positions include glycine 159, 185 to 186 (AG), and 207 to 208 (NT).

Belongs to the ThiG family. As to quaternary structure, homotetramer. Forms heterodimers with either ThiH or ThiS.

The protein resides in the cytoplasm. The catalysed reaction is [ThiS sulfur-carrier protein]-C-terminal-Gly-aminoethanethioate + 2-iminoacetate + 1-deoxy-D-xylulose 5-phosphate = [ThiS sulfur-carrier protein]-C-terminal Gly-Gly + 2-[(2R,5Z)-2-carboxy-4-methylthiazol-5(2H)-ylidene]ethyl phosphate + 2 H2O + H(+). It functions in the pathway cofactor biosynthesis; thiamine diphosphate biosynthesis. Functionally, catalyzes the rearrangement of 1-deoxy-D-xylulose 5-phosphate (DXP) to produce the thiazole phosphate moiety of thiamine. Sulfur is provided by the thiocarboxylate moiety of the carrier protein ThiS. In vitro, sulfur can be provided by H(2)S. In Anaeromyxobacter dehalogenans (strain 2CP-C), this protein is Thiazole synthase.